The sequence spans 245 residues: Sugar fermentation stimulation protein homolog (245 aa).

It belongs to the SfsA family.

The sequence is that of Sugar fermentation stimulation protein homolog from Yersinia pestis bv. Antiqua (strain Nepal516).